Reading from the N-terminus, the 160-residue chain is Lipoprotein signal peptidase (160 aa).

Helical transmembrane passes span Val-6 to Leu-26, Leu-58 to Leu-78, and Phe-95 to Val-115. Active-site residues include Asp-117 and Asp-135. A helical membrane pass occupies residues Ser-127–Leu-147.

Belongs to the peptidase A8 family.

The protein resides in the cell inner membrane. The enzyme catalyses Release of signal peptides from bacterial membrane prolipoproteins. Hydrolyzes -Xaa-Yaa-Zaa-|-(S,diacylglyceryl)Cys-, in which Xaa is hydrophobic (preferably Leu), and Yaa (Ala or Ser) and Zaa (Gly or Ala) have small, neutral side chains.. It participates in protein modification; lipoprotein biosynthesis (signal peptide cleavage). This protein specifically catalyzes the removal of signal peptides from prolipoproteins. The protein is Lipoprotein signal peptidase of Brucella abortus (strain S19).